A 682-amino-acid polypeptide reads, in one-letter code: MFEQNQKTIFVLDHTRYFSIASEDYISMDFLKGKPSVDTGTGAGVGGASGLGTQFSKSLWTCACESSIEYCRVVWDLFPGKKHVRFIVSDTAAHIVNTWSTSTQNMSHVMNAMVMVGVPSRSMPQSSDYSVIHGLRAAIEALAEPTDEQLATIASGEPVHIPNEGRVICITSARDNTSMKSLEDIFNTVLIQQNALAGPPAKKGLAIDHCHLVILNIVPLGVESLVTNRGLLNISPLLDVEIHTVSAPDISHKLTHLILDHYNLASTTVTNIPMKEEQNANSSANYDVEILHSRSAHSIACGPDFSLPTSIKPGATYETVTLKWCTPRGCGSADLQPCLGQFLVTPVDVTSRPSSCLINFLLNGRSVLLEMPRKAGSKATSHMLSARGGEIFIHSLCITRSCMDEAPAIGDGPGGRVTDYRTTELGQLMKMSRMVPLKAKDPTAPGLPRRMPRYFPLTNGSSILFHLQRHISWMPHFLHLLVKEDMDKQEEVRCQQHIHELYKSASRGDMLPFTHTNGARLKLSKAKDQYRLLYRELEQLIHLNATTVHHKNLLESLQSLRAAYGEAKSEPNSSLLRSYTESPHSPERLEPIPSGGSSGSNSNSLLKASKRRMSSCGQRSLLDIISSAERSQANKRLDFSGRLCTPLGQVAKLYPDFGNKEKDSLLAGTTAAPNVKEESIRS.

The stretch at 517 to 570 forms a coiled coil; sequence NGARLKLSKAKDQYRLLYRELEQLIHLNATTVHHKNLLESLQSLRAAYGEAKSE. Residues 571 to 583 show a composition bias toward polar residues; the sequence is PNSSLLRSYTESP. The disordered stretch occupies residues 571-612; it reads PNSSLLRSYTESPHSPERLEPIPSGGSSGSNSNSLLKASKRR. A Nuclear localization signal (NLS) motif is present at residues 606 to 612; that stretch reads LKASKRR.

This sequence belongs to the Integrator subunit 13 family. In terms of assembly, belongs to the multiprotein complex Integrator, at least composed of IntS1, IntS2, IntS3, IntS4, omd/IntS5, IntS6, defl/IntS7, IntS8, IntS9, IntS10, IntS11, IntS12, asun/IntS13, IntS14 and IntS15. The core complex associates with protein phosphatase 2A subunits mts/PP2A and Pp2A-29B, to form the Integrator-PP2A (INTAC) complex. In terms of processing, phosphorylated.

Its subcellular location is the nucleus. The protein localises to the cytoplasm. It is found in the perinuclear region. Its function is as follows. Component of the integrator complex, a multiprotein complex that terminates RNA polymerase II (Pol II) transcription in the promoter-proximal region of genes. The integrator complex provides a quality checkpoint during transcription elongation by driving premature transcription termination of transcripts that are unfavorably configured for transcriptional elongation: the complex terminates transcription by (1) catalyzing dephosphorylation of the C-terminal domain (CTD) of Pol II subunit Polr2A/Rbp1 and Spt5, and (2) degrading the exiting nascent RNA transcript via endonuclease activity. The integrator complex is also involved in the 3'-end processing of the U7 snRNA, and also the spliceosomal snRNAs U1, U2, U4 and U5. The chain is Protein asunder (asun) from Drosophila ananassae (Fruit fly).